Here is a 706-residue protein sequence, read N- to C-terminus: ATP-dependent DNA helicase HMI1, mitochondrial (706 aa).

In terms of domain architecture, UvrD-like helicase ATP-binding spans 5–277 (TPSQWKVINK…LKLFDNFRST (273 aa)). Residues 29–34 (GSGKTL) and Arg275 contribute to the ATP site. The UvrD-like helicase C-terminal domain maps to 278 to 593 (PEIISLASKI…KLSTIHSAKG (316 aa)). Residues 693–706 (YSSLRGCKSVFRRI) constitute a propeptide, cleaved upon import into mitochondrion.

This sequence belongs to the helicase family. UvrD subfamily. The cofactor is Mg(2+).

It is found in the mitochondrion inner membrane. The catalysed reaction is Couples ATP hydrolysis with the unwinding of duplex DNA by translocating in the 3'-5' direction.. It carries out the reaction ATP + H2O = ADP + phosphate + H(+). In terms of biological role, required for mitochondrial genome maintenance and mitochondrial DNA inheritance. The protein is ATP-dependent DNA helicase HMI1, mitochondrial (HMI1) of Saccharomyces cerevisiae (strain ATCC 204508 / S288c) (Baker's yeast).